A 292-amino-acid chain; its full sequence is tRNA pseudouridine synthase B (292 aa).

Asp40 acts as the Nucleophile in catalysis.

Belongs to the pseudouridine synthase TruB family. Type 1 subfamily.

It catalyses the reaction uridine(55) in tRNA = pseudouridine(55) in tRNA. Its function is as follows. Responsible for synthesis of pseudouridine from uracil-55 in the psi GC loop of transfer RNAs. This chain is tRNA pseudouridine synthase B, found in Mycoplasma capricolum subsp. capricolum (strain California kid / ATCC 27343 / NCTC 10154).